A 180-amino-acid polypeptide reads, in one-letter code: ADP ribosylation factor 4 (180 aa).

G2 carries N-myristoyl glycine lipidation. Residues 24–31 (GLDAAGKT), 67–71 (DVGGQ), and 126–129 (NKQD) each bind GTP.

This sequence belongs to the small GTPase superfamily. Arf family. In terms of tissue distribution, uniformly distributed throughout adults.

The protein localises to the golgi apparatus. Its function is as follows. GTP-binding protein involved in protein trafficking; may modulate vesicle budding and uncoating within the Golgi apparatus. In Drosophila melanogaster (Fruit fly), this protein is ADP ribosylation factor 4.